The following is a 431-amino-acid chain: Histidinol dehydrogenase (431 aa).

The NAD(+) site is built by Y129, Q191, and N214. The substrate site is built by S237, Q259, and H262. Zn(2+)-binding residues include Q259 and H262. Catalysis depends on proton acceptor residues E327 and H328. Residues H328, D361, E415, and H420 each contribute to the substrate site. D361 contributes to the Zn(2+) binding site. Residue H420 participates in Zn(2+) binding.

This sequence belongs to the histidinol dehydrogenase family. The cofactor is Zn(2+).

The enzyme catalyses L-histidinol + 2 NAD(+) + H2O = L-histidine + 2 NADH + 3 H(+). It participates in amino-acid biosynthesis; L-histidine biosynthesis; L-histidine from 5-phospho-alpha-D-ribose 1-diphosphate: step 9/9. Its function is as follows. Catalyzes the sequential NAD-dependent oxidations of L-histidinol to L-histidinaldehyde and then to L-histidine. The protein is Histidinol dehydrogenase (hisD) of Lactococcus lactis subsp. lactis (strain IL1403) (Streptococcus lactis).